The sequence spans 368 residues: S-adenosylmethionine decarboxylase proenzyme (368 aa).

Active-site residues include E26 and E29. S83 acts as the Schiff-base intermediate with substrate; via pyruvic acid in catalysis. At S83 the chain carries Pyruvic acid (Ser); by autocatalysis. The active-site Proton donor; for catalytic activity is C97. Residues S246 and H261 each act as proton acceptor; for processing activity in the active site.

The protein belongs to the eukaryotic AdoMetDC family. Heterotetramer of two alpha and two beta chains. It depends on pyruvate as a cofactor. Post-translationally, is synthesized initially as an inactive proenzyme. Formation of the active enzyme involves a self-maturation process in which the active site pyruvoyl group is generated from an internal serine residue via an autocatalytic post-translational modification. Two non-identical subunits are generated from the proenzyme in this reaction, and the pyruvate is formed at the N-terminus of the alpha chain, which is derived from the carboxyl end of the proenzyme. The post-translation cleavage follows an unusual pathway, termed non-hydrolytic serinolysis, in which the side chain hydroxyl group of the serine supplies its oxygen atom to form the C-terminus of the beta chain, while the remainder of the serine residue undergoes an oxidative deamination to produce ammonia and the pyruvoyl group blocking the N-terminus of the alpha chain.

The catalysed reaction is S-adenosyl-L-methionine + H(+) = S-adenosyl 3-(methylsulfanyl)propylamine + CO2. It functions in the pathway amine and polyamine biosynthesis; S-adenosylmethioninamine biosynthesis; S-adenosylmethioninamine from S-adenosyl-L-methionine: step 1/1. Its function is as follows. Essential for biosynthesis of the polyamines spermidine and spermine. Polyamines are essential for cell proliferation and are implicated in cellular processes, ranging from DNA replication to apoptosis. The sequence is that of S-adenosylmethionine decarboxylase proenzyme from Caenorhabditis elegans.